The sequence spans 267 residues: REH2-associated factor 2 (267 aa).

In terms of assembly, component of the REH2-associated complex (REH2C) composed of helicase REH2, associated factors H2F1 and H2F2, and mRNAs at various editing stages; the formation of the complex is RNA-independent. Interacts with various editing complexes including the RNA editing core (RECC) complex, the gRNA-binding (GRBC) complex (also known as the MRB1 complex) and the RNA editing mediator (REMC) complex.

The protein localises to the mitochondrion. In terms of biological role, may play a role in mitochondrial mRNA editing by facilitating the association of the gRNA-binding (GRBC) complex with the RNA editing core (RECC) complex. However, appears to be dispensable for mRNA editing per se. This chain is REH2-associated factor 2, found in Trypanosoma brucei brucei (strain 927/4 GUTat10.1).